Consider the following 610-residue polypeptide: Phosphoprotein 85 (610 aa).

Disordered stretches follow at residues 462–530 and 543–610; these read NEGR…NISD and EEPM…DARL. Residues 467-478 are compositionally biased toward low complexity; that stretch reads SSRASPSHSTST. Over residues 484–495 the composition is skewed to polar residues; the sequence is PQSDRSTPTSIL. 2 stretches are compositionally biased toward low complexity: residues 503–515 and 552–567; these read SNSR…FSQE and SPQS…RQSR. The span at 581 to 592 shows a compositional bias: polar residues; the sequence is VPSSQTRRQNNA. Over residues 600 to 610 the composition is skewed to basic and acidic residues; sequence RLTEMMNDARL.

This sequence belongs to the herpesviridae pp85 family. Phosphorylated.

The protein localises to the virion tegument. The protein resides in the host cytoplasm. The polypeptide is Phosphoprotein 85 (U14) (Homo sapiens (Human)).